A 444-amino-acid polypeptide reads, in one-letter code: Phosphoribosylamine--glycine ligase (444 aa).

One can recognise an ATP-grasp domain in the interval 109-324 (RNLFKKYEID…FLDVCFAIAE (216 aa)). 140-202 (MTSLGKDVVV…EEKLVGVEFT (63 aa)) provides a ligand contact to ATP. 3 residues coordinate Mg(2+): glutamine 282, glutamate 294, and asparagine 296. The Mn(2+) site is built by glutamine 282, glutamate 294, and asparagine 296.

Belongs to the GARS family. It depends on Mg(2+) as a cofactor. The cofactor is Mn(2+).

It carries out the reaction 5-phospho-beta-D-ribosylamine + glycine + ATP = N(1)-(5-phospho-beta-D-ribosyl)glycinamide + ADP + phosphate + H(+). Its pathway is purine metabolism; IMP biosynthesis via de novo pathway; N(1)-(5-phospho-D-ribosyl)glycinamide from 5-phospho-alpha-D-ribose 1-diphosphate: step 2/2. In Methanococcus maripaludis (strain DSM 14266 / JCM 13030 / NBRC 101832 / S2 / LL), this protein is Phosphoribosylamine--glycine ligase.